The following is a 76-amino-acid chain: MNSVGEACTDMKREYDQCFNRWFAEKFLKGDSSGDPCTDLFKRYQQCVQKAIKEKEIPIEGLEFMGHGKEKPENSS.

At Met1 the chain carries N-acetylmethionine. Residues 1-52 (MNSVGEACTDMKREYDQCFNRWFAEKFLKGDSSGDPCTDLFKRYQQCVQKAI) adopt a coiled-coil conformation. Residues 5–55 (GEACTDMKREYDQCFNRWFAEKFLKGDSSGDPCTDLFKRYQQCVQKAIKEK) enclose the CHCH domain. 2 short sequence motifs (cx9C motif) span residues 8–18 (CTDMKREYDQC) and 37–47 (CTDLFKRYQQC). Disulfide bonds link Cys8/Cys47 and Cys18/Cys37.

It belongs to the TRIAP1/MDM35 family. In terms of assembly, monomer. Interacts with APAF1 and HSP70. Forms a complex with PRELID1 in the mitochondrion intermembrane space. Interacts with PRELID3A.

It localises to the mitochondrion. It is found in the mitochondrion intermembrane space. The catalysed reaction is a 1,2-diacyl-sn-glycero-3-phosphate(in) = a 1,2-diacyl-sn-glycero-3-phosphate(out). In terms of biological role, involved in the modulation of the mitochondrial apoptotic pathway by ensuring the accumulation of cardiolipin (CL) in mitochondrial membranes. In vitro, the TRIAP1:PRELID1 complex mediates the transfer of phosphatidic acid (PA) between liposomes and probably functions as a PA transporter across the mitochondrion intermembrane space to provide PA for CL synthesis in the inner membrane. Likewise, the TRIAP1:PRELID3A complex mediates the transfer of phosphatidic acid (PA) between liposomes (in vitro) and probably functions as a PA transporter across the mitochondrion intermembrane space (in vivo). Mediates cell survival by inhibiting activation of caspase-9 which prevents induction of apoptosis. This is TP53-regulated inhibitor of apoptosis 1 (TRIAP1) from Homo sapiens (Human).